The following is a 432-amino-acid chain: Glutamyl-tRNA reductase (432 aa).

Residues 49–52 (TCNR), Ser109, 114–116 (EGQ), and Gln120 each bind substrate. Cys50 functions as the Nucleophile in the catalytic mechanism. 189-194 (GAGKMS) is an NADP(+) binding site.

It belongs to the glutamyl-tRNA reductase family. As to quaternary structure, homodimer.

It is found in the plastid. Its subcellular location is the cyanelle. The enzyme catalyses (S)-4-amino-5-oxopentanoate + tRNA(Glu) + NADP(+) = L-glutamyl-tRNA(Glu) + NADPH + H(+). The protein operates within porphyrin-containing compound metabolism; protoporphyrin-IX biosynthesis; 5-aminolevulinate from L-glutamyl-tRNA(Glu): step 1/2. It functions in the pathway porphyrin-containing compound metabolism; chlorophyll biosynthesis. Its function is as follows. Catalyzes the NADPH-dependent reduction of glutamyl-tRNA(Glu) to glutamate 1-semialdehyde (GSA). This chain is Glutamyl-tRNA reductase, found in Cyanophora paradoxa.